Here is a 156-residue protein sequence, read N- to C-terminus: Small ribosomal subunit protein uS7 (156 aa).

This sequence belongs to the universal ribosomal protein uS7 family. Part of the 30S ribosomal subunit. Contacts proteins S9 and S11.

Functionally, one of the primary rRNA binding proteins, it binds directly to 16S rRNA where it nucleates assembly of the head domain of the 30S subunit. Is located at the subunit interface close to the decoding center, probably blocks exit of the E-site tRNA. The polypeptide is Small ribosomal subunit protein uS7 (Salmonella choleraesuis (strain SC-B67)).